Consider the following 253-residue polypeptide: Tryptophan synthase alpha chain (253 aa).

Active-site proton acceptor residues include Glu47 and Asp58.

Belongs to the TrpA family. Tetramer of two alpha and two beta chains.

The catalysed reaction is (1S,2R)-1-C-(indol-3-yl)glycerol 3-phosphate + L-serine = D-glyceraldehyde 3-phosphate + L-tryptophan + H2O. The protein operates within amino-acid biosynthesis; L-tryptophan biosynthesis; L-tryptophan from chorismate: step 5/5. Its function is as follows. The alpha subunit is responsible for the aldol cleavage of indoleglycerol phosphate to indole and glyceraldehyde 3-phosphate. The polypeptide is Tryptophan synthase alpha chain (Desulforapulum autotrophicum (strain ATCC 43914 / DSM 3382 / VKM B-1955 / HRM2) (Desulfobacterium autotrophicum)).